The sequence spans 76 residues: Putative phosphotransferase enzyme IIA component YyzE (76 aa).

Positions 1–76 (MVTPTKHAIG…LHQKIFTVVS (76 aa)) constitute a PTS EIIA type-1 domain. H22 acts as the Tele-phosphohistidine intermediate in catalysis.

The protein resides in the cytoplasm. The phosphoenolpyruvate-dependent sugar phosphotransferase system (PTS), a major carbohydrate active -transport system, catalyzes the phosphorylation of incoming sugar substrates concomitant with their translocation across the cell membrane. The sequence is that of Putative phosphotransferase enzyme IIA component YyzE (yyzE) from Bacillus subtilis (strain 168).